A 1125-amino-acid polypeptide reads, in one-letter code: ATP-dependent DNA helicase Hel308 (1125 aa).

The Q motif signature appears at 1-29; the sequence is MKVDELPIDERIKRVIKERGIEELYPPQA. ATP is bound by residues Q28 and 46 to 53; that span reads IPTASGKT. A Helicase ATP-binding domain is found at 33 to 197; it reads KSGVLEGKNL…WLDASLVVSD (165 aa). The DEAH box motif lies at 145–148; that stretch reads DEVH. A Helicase C-terminal domain is found at 226-440; it reads NWESLVLDAV…ELKERLESET (215 aa). The DOD-type homing endonuclease domain maps to 500–640; the sequence is LIGLWIAEGS…LQLLVASLGY (141 aa).

It belongs to the helicase family. Hel308 subfamily. As to quaternary structure, monomer. This protein undergoes a protein self splicing that involves a post-translational excision of the intervening region (intein) followed by peptide ligation.

The enzyme catalyses Couples ATP hydrolysis with the unwinding of duplex DNA by translocating in the 3'-5' direction.. It carries out the reaction ATP + H2O = ADP + phosphate + H(+). In terms of biological role, DNA-dependent ATPase and 3'-5' DNA helicase that may be involved in repair of stalled replication forks. This chain is ATP-dependent DNA helicase Hel308, found in Thermococcus kodakarensis (strain ATCC BAA-918 / JCM 12380 / KOD1) (Pyrococcus kodakaraensis (strain KOD1)).